We begin with the raw amino-acid sequence, 499 residues long: Citrinin biosynthesis cluster MFS transporter mrr1 (499 aa).

The segment at 1–29 is disordered; it reads MKEEIDAPVSTDASGTDLENARDQPSGEK. Helical transmembrane passes span 58–78, 95–115, 124–144, 155–175, 187–207, 215–235, 291–311, and 327–347; these read SLIT…SSVF, VMTL…LVWG, LKPL…VAVA, FFLG…LADF, LFSA…GFIV, WTAW…FLTL, ILVC…LFFV, and GIAA…CLLV. Asn-361 carries N-linked (GlcNAc...) asparagine glycosylation. 4 helical membrane-spanning segments follow: residues 370-390, 395-415, 443-463, and 467-487; these read LPPM…FGWT, ISWA…LMIW, AVGA…GVDW, and LLGF…FYGA.

It belongs to the major facilitator superfamily. CAR1 family.

It localises to the membrane. MFS transporter; part of the gene cluster that mediates the biosynthesis the mycotoxin citrinin, a hepato-nephrotoxic compound to humans due to inhibition of respiration complex III. The chain is Citrinin biosynthesis cluster MFS transporter mrr1 from Monascus ruber (Mold).